The primary structure comprises 803 residues: Translation initiation factor IF-2 (803 aa).

Disordered stretches follow at residues 95-125 and 138-178; these read PVVE…EKAE and EVKE…EREE. Residues 111-121 are compositionally biased toward polar residues; that stretch reads VPLTSDTTNLN. A compositionally biased stretch (basic and acidic residues) spans 138–155; that stretch reads EVKEEAKKTPSEKKETPK. The span at 156–167 shows a compositional bias: basic residues; sequence KGPRKETRRSRK. Basic and acidic residues predominate over residues 168–178; the sequence is PDKEDKWEREE. One can recognise a tr-type G domain in the interval 302 to 471; that stretch reads PRAPVVTIMG…LLQAEVLELK (170 aa). Positions 311–318 are G1; it reads GHVDHGKT. 311–318 is a GTP binding site; the sequence is GHVDHGKT. The interval 336 to 340 is G2; the sequence is GITQH. Residues 357–360 are G3; the sequence is DTPG. GTP contacts are provided by residues 357 to 361 and 411 to 414; these read DTPGH and NKID. The segment at 411–414 is G4; the sequence is NKID. The G5 stretch occupies residues 447–449; the sequence is SAK.

It belongs to the TRAFAC class translation factor GTPase superfamily. Classic translation factor GTPase family. IF-2 subfamily.

It localises to the cytoplasm. Functionally, one of the essential components for the initiation of protein synthesis. Protects formylmethionyl-tRNA from spontaneous hydrolysis and promotes its binding to the 30S ribosomal subunits. Also involved in the hydrolysis of GTP during the formation of the 70S ribosomal complex. This is Translation initiation factor IF-2 from Coxiella burnetii (strain CbuK_Q154) (Coxiella burnetii (strain Q154)).